Consider the following 314-residue polypeptide: tRNA(Ile)-lysidine synthase (314 aa).

An ATP-binding site is contributed by Ser37–Ser42.

It belongs to the tRNA(Ile)-lysidine synthase family.

It is found in the cytoplasm. The enzyme catalyses cytidine(34) in tRNA(Ile2) + L-lysine + ATP = lysidine(34) in tRNA(Ile2) + AMP + diphosphate + H(+). Its function is as follows. Ligates lysine onto the cytidine present at position 34 of the AUA codon-specific tRNA(Ile) that contains the anticodon CAU, in an ATP-dependent manner. Cytidine is converted to lysidine, thus changing the amino acid specificity of the tRNA from methionine to isoleucine. The chain is tRNA(Ile)-lysidine synthase from Corynebacterium glutamicum (strain ATCC 13032 / DSM 20300 / JCM 1318 / BCRC 11384 / CCUG 27702 / LMG 3730 / NBRC 12168 / NCIMB 10025 / NRRL B-2784 / 534).